Consider the following 305-residue polypeptide: Probable branched-chain-amino-acid aminotransferase (305 aa).

Lys-156 is modified (N6-(pyridoxal phosphate)lysine).

The protein belongs to the class-IV pyridoxal-phosphate-dependent aminotransferase family. Requires pyridoxal 5'-phosphate as cofactor.

It carries out the reaction L-leucine + 2-oxoglutarate = 4-methyl-2-oxopentanoate + L-glutamate. The catalysed reaction is L-isoleucine + 2-oxoglutarate = (S)-3-methyl-2-oxopentanoate + L-glutamate. The enzyme catalyses L-valine + 2-oxoglutarate = 3-methyl-2-oxobutanoate + L-glutamate. The protein operates within amino-acid biosynthesis; L-isoleucine biosynthesis; L-isoleucine from 2-oxobutanoate: step 4/4. It functions in the pathway amino-acid biosynthesis; L-leucine biosynthesis; L-leucine from 3-methyl-2-oxobutanoate: step 4/4. Its pathway is amino-acid biosynthesis; L-valine biosynthesis; L-valine from pyruvate: step 4/4. Acts on leucine, isoleucine and valine. This chain is Probable branched-chain-amino-acid aminotransferase (ilvE), found in Synechocystis sp. (strain ATCC 27184 / PCC 6803 / Kazusa).